Reading from the N-terminus, the 676-residue chain is Putative Xaa-Pro dipeptidyl-peptidase (676 aa).

Catalysis depends on charge relay system residues serine 224, aspartate 330, and histidine 361. Positions 423–450 (RPGTGTQAGVGTLGLRTGSGTETFTDDP) are disordered.

It belongs to the peptidase S15 family.

The catalysed reaction is Hydrolyzes Xaa-Pro-|- bonds to release unblocked, N-terminal dipeptides from substrates including Ala-Pro-|-p-nitroanilide and (sequentially) Tyr-Pro-|-Phe-Pro-|-Gly-Pro-|-Ile.. The sequence is that of Putative Xaa-Pro dipeptidyl-peptidase from Streptomyces avermitilis (strain ATCC 31267 / DSM 46492 / JCM 5070 / NBRC 14893 / NCIMB 12804 / NRRL 8165 / MA-4680).